The sequence spans 289 residues: Shikimate dehydrogenase (NADP(+)) (289 aa).

Residues serine 22 to serine 24 and threonine 69 each bind shikimate. Lysine 73 serves as the catalytic Proton acceptor. Glutamate 85 is an NADP(+) binding site. Shikimate contacts are provided by asparagine 94 and aspartate 109. Residues glycine 134–alanine 138, asparagine 158–arginine 163, and isoleucine 226 contribute to the NADP(+) site. Tyrosine 228 contributes to the shikimate binding site. NADP(+) is bound at residue glycine 249.

The protein belongs to the shikimate dehydrogenase family. Homodimer.

It catalyses the reaction shikimate + NADP(+) = 3-dehydroshikimate + NADPH + H(+). It participates in metabolic intermediate biosynthesis; chorismate biosynthesis; chorismate from D-erythrose 4-phosphate and phosphoenolpyruvate: step 4/7. In terms of biological role, involved in the biosynthesis of the chorismate, which leads to the biosynthesis of aromatic amino acids. Catalyzes the reversible NADPH linked reduction of 3-dehydroshikimate (DHSA) to yield shikimate (SA). The chain is Shikimate dehydrogenase (NADP(+)) from Brucella canis (strain ATCC 23365 / NCTC 10854 / RM-666).